The following is a 417-amino-acid chain: DNA-directed RNA polymerase subunit beta (417 aa).

It belongs to the RNA polymerase beta chain family. In plastids the minimal PEP RNA polymerase catalytic core is composed of four subunits: alpha, beta, beta', and beta''. When a (nuclear-encoded) sigma factor is associated with the core the holoenzyme is formed, which can initiate transcription.

Its subcellular location is the plastid. The protein resides in the chloroplast. It catalyses the reaction RNA(n) + a ribonucleoside 5'-triphosphate = RNA(n+1) + diphosphate. Functionally, DNA-dependent RNA polymerase catalyzes the transcription of DNA into RNA using the four ribonucleoside triphosphates as substrates. The protein is DNA-directed RNA polymerase subunit beta (rpoB) of Saponaria officinalis (Common soapwort).